Consider the following 376-residue polypeptide: 26S proteasome non-ATPase regulatory subunit 13 (376 aa).

Positions 171–338 (SYYKDALRFL…KRVHMTWVQP (168 aa)) constitute a PCI domain. Residue Lys298 is modified to N6-acetyllysine.

This sequence belongs to the proteasome subunit S11 family. As to quaternary structure, component of the 19S proteasome regulatory particle complex. The 26S proteasome consists of a 20S core particle (CP) and two 19S regulatory subunits (RP). The regulatory particle is made of a lid composed of 9 subunits including PSMD13, a base containing 6 ATPases and few additional components.

Component of the 26S proteasome, a multiprotein complex involved in the ATP-dependent degradation of ubiquitinated proteins. This complex plays a key role in the maintenance of protein homeostasis by removing misfolded or damaged proteins, which could impair cellular functions, and by removing proteins whose functions are no longer required. Therefore, the proteasome participates in numerous cellular processes, including cell cycle progression, apoptosis, or DNA damage repair. The sequence is that of 26S proteasome non-ATPase regulatory subunit 13 (Psmd13) from Mus musculus (Mouse).